We begin with the raw amino-acid sequence, 192 residues long: 3-isopropylmalate dehydratase small subunit (192 aa).

It belongs to the LeuD family. LeuD type 1 subfamily. Heterodimer of LeuC and LeuD.

It carries out the reaction (2R,3S)-3-isopropylmalate = (2S)-2-isopropylmalate. The protein operates within amino-acid biosynthesis; L-leucine biosynthesis; L-leucine from 3-methyl-2-oxobutanoate: step 2/4. In terms of biological role, catalyzes the isomerization between 2-isopropylmalate and 3-isopropylmalate, via the formation of 2-isopropylmaleate. The polypeptide is 3-isopropylmalate dehydratase small subunit (Zymomonas mobilis subsp. mobilis (strain ATCC 31821 / ZM4 / CP4)).